Consider the following 450-residue polypeptide: Protein tweety homolog 1 (450 aa).

Residues 1-43 (MGAPPGYRPSAWVHLLHQLPRADFQLRPVPSVFAPQEQEYQQA) lie on the Extracellular side of the membrane. Residues 44–64 (LLLVAALAGLGLGLSLIFIAV) traverse the membrane as a helical segment. Residues 65 to 88 (YLIRFCCCRPPEPPGSKIPSPGGG) lie on the Cytoplasmic side of the membrane. A helical transmembrane segment spans residues 89–109 (CVTWSCIVALLAGCTGIGIGF). The Extracellular segment spans residues 110–214 (YGNSETSDGV…NVSFVEEYRW (105 aa)). N-linked (GlcNAc...) asparagine glycans are attached at residues Asn130 and Asn205. Residues 215–235 (LAYVLLLLLELLVCLFTLLGL) traverse the membrane as a helical segment. Residues 236–240 (AKQSK) are Cytoplasmic-facing. A helical membrane pass occupies residues 241-261 (WLVIVMTVMSLLVLVLSWGSM). Topologically, residues 262 to 390 (GLEAATAVGL…LRGLCEDALE (129 aa)) are extracellular. 2 cysteine pairs are disulfide-bonded: Cys275/Cys385 and Cys303/Cys370. N-linked (GlcNAc...) asparagine glycosylation is found at Asn284 and Asn355. Residues 391-411 (GLLFLLLFSLLSAGALATALC) traverse the membrane as a helical segment. Topologically, residues 412–450 (SLPRAWALFPPSDDYDDTDDDDPFNPQESKRFVQWQSSI) are cytoplasmic. Residues 428-450 (DTDDDDPFNPQESKRFVQWQSSI) are disordered. Phosphoserine is present on Ser440.

It belongs to the tweety family. In terms of assembly, homotetramer; disulfide-linked. Homodimer. N-glycosylated. Contains high-mannose, hybrid and complex oligosaccharides. As to expression, expressed in brain, eye, ovary and testis, and at lower levels in muscle, placenta, liver and lung.

The protein localises to the cell membrane. It catalyses the reaction chloride(in) = chloride(out). The catalysed reaction is L-glutamate(out) = L-glutamate(in). Functionally, calcium-independent, swelling-dependent volume-regulated anion channel (VRAC-swell) which plays a pivotal role in the process of regulatory volume decrease (RVD) in the brain through the efflux of anions like chloride and organic osmolytes like glutamate. In terms of biological role, ca(2+)-independent, swelling-activated chloride channel, possibly involved in regulation of cell volume. The polypeptide is Protein tweety homolog 1 (TTYH1) (Homo sapiens (Human)).